The chain runs to 32 residues: Beta-1,4-galactosyltransferase 1 (32 aa).

The protein belongs to the glycosyltransferase 7 family. It depends on Mn(2+) as a cofactor. In terms of processing, the soluble form derives from the membrane form by proteolytic processing.

Its subcellular location is the golgi apparatus. The protein localises to the golgi stack membrane. The protein resides in the secreted. It localises to the cell membrane. It is found in the cell projection. Its subcellular location is the filopodium. It catalyses the reaction D-glucose + UDP-alpha-D-galactose = lactose + UDP + H(+). The enzyme catalyses an N-acetyl-beta-D-glucosaminyl derivative + UDP-alpha-D-galactose = a beta-D-galactosyl-(1-&gt;4)-N-acetyl-beta-D-glucosaminyl derivative + UDP + H(+). It carries out the reaction N-acetyl-D-glucosamine + UDP-alpha-D-galactose = beta-D-galactosyl-(1-&gt;4)-N-acetyl-D-glucosamine + UDP + H(+). The catalysed reaction is a beta-D-GlcNAc-(1-&gt;3)-beta-D-Gal-(1-&gt;4)-beta-D-Glc-(1&lt;-&gt;1)-Cer(d18:1(4E)) + UDP-alpha-D-galactose = a neolactoside nLc4Cer(d18:1(4E)) + UDP + H(+). It catalyses the reaction a beta-D-glucosylceramide + UDP-alpha-D-galactose = a beta-D-galactosyl-(1-&gt;4)-beta-D-glucosyl-(1&lt;-&gt;1)-ceramide + UDP + H(+). The enzyme catalyses a neolactoside IV(3)-beta-GlcNAc-nLc4Cer + UDP-alpha-D-galactose = a neolactoside nLc6Cer + UDP + H(+). Its pathway is protein modification; protein glycosylation. This protein is responsible for the synthesis of complex-type N-linked oligosaccharides in many glycoproteins as well as the carbohydrate moieties of glycolipids. The sequence is that of Beta-1,4-galactosyltransferase 1 from Rattus norvegicus (Rat).